The sequence spans 175 residues: Ribosome maturation factor RimM (175 aa).

The 73-residue stretch at 97–169 (EDKFYFHEII…TVRVITPEGL (73 aa)) folds into the PRC barrel domain.

This sequence belongs to the RimM family. In terms of assembly, binds ribosomal protein uS19.

The protein resides in the cytoplasm. In terms of biological role, an accessory protein needed during the final step in the assembly of 30S ribosomal subunit, possibly for assembly of the head region. Essential for efficient processing of 16S rRNA. May be needed both before and after RbfA during the maturation of 16S rRNA. It has affinity for free ribosomal 30S subunits but not for 70S ribosomes. The protein is Ribosome maturation factor RimM of Christiangramia forsetii (strain DSM 17595 / CGMCC 1.15422 / KT0803) (Gramella forsetii).